Consider the following 457-residue polypeptide: tRNA modification GTPase MnmE (457 aa).

Arg23, Glu85, and Arg124 together coordinate (6S)-5-formyl-5,6,7,8-tetrahydrofolate. Residues 220–376 (GALVVLAGQV…LVTAIRAAVL (157 aa)) form the TrmE-type G domain. Asn230 provides a ligand contact to K(+). Residues 230-235 (NAGKSS), 249-255 (TDLPGTT), and 274-277 (DTAG) each bind GTP. Ser234 contacts Mg(2+). The K(+) site is built by Thr249, Leu251, and Thr254. Thr255 serves as a coordination point for Mg(2+). Lys457 is a (6S)-5-formyl-5,6,7,8-tetrahydrofolate binding site.

This sequence belongs to the TRAFAC class TrmE-Era-EngA-EngB-Septin-like GTPase superfamily. TrmE GTPase family. Homodimer. Heterotetramer of two MnmE and two MnmG subunits. K(+) serves as cofactor.

It localises to the cytoplasm. Functionally, exhibits a very high intrinsic GTPase hydrolysis rate. Involved in the addition of a carboxymethylaminomethyl (cmnm) group at the wobble position (U34) of certain tRNAs, forming tRNA-cmnm(5)s(2)U34. This chain is tRNA modification GTPase MnmE, found in Nitratidesulfovibrio vulgaris (strain DP4) (Desulfovibrio vulgaris).